The primary structure comprises 65 residues: SPbeta prophage-derived uncharacterized protein YopU (65 aa).

The polypeptide is SPbeta prophage-derived uncharacterized protein YopU (yopU) (Bacillus subtilis (strain 168)).